Here is a 120-residue protein sequence, read N- to C-terminus: MLVNRRYTAKGKNLPASPKKVRPIADNIRGKSYVKAIAVLCSMPNKGAKLLEKVVKSAASNAMYHNKNLSEDMIFIKMVMVDDGRRRKKIWPRARGRADRLVNRNCHIFVEVDEKKDIKG.

It belongs to the universal ribosomal protein uL22 family. In terms of assembly, part of the 50S ribosomal subunit.

This protein binds specifically to 23S rRNA; its binding is stimulated by other ribosomal proteins, e.g. L4, L17, and L20. It is important during the early stages of 50S assembly. It makes multiple contacts with different domains of the 23S rRNA in the assembled 50S subunit and ribosome. Functionally, the globular domain of the protein is located near the polypeptide exit tunnel on the outside of the subunit, while an extended beta-hairpin is found that lines the wall of the exit tunnel in the center of the 70S ribosome. The chain is Large ribosomal subunit protein uL22 from Borreliella afzelii (strain PKo) (Borrelia afzelii).